We begin with the raw amino-acid sequence, 398 residues long: Succinate--CoA ligase [ADP-forming] subunit beta (398 aa).

An ATP-grasp domain is found at 9-250 (KQLFARYGVP…VDEEDPVELQ (242 aa)). ATP is bound by residues Lys-50, 57 to 59 (GRG), Glu-104, Leu-107, and Glu-112. Asn-205 and Asp-219 together coordinate Mg(2+). Substrate contacts are provided by residues Asn-270 and 327-329 (GIM).

Belongs to the succinate/malate CoA ligase beta subunit family. As to quaternary structure, heterotetramer of two alpha and two beta subunits. Mg(2+) serves as cofactor.

The enzyme catalyses succinate + ATP + CoA = succinyl-CoA + ADP + phosphate. It catalyses the reaction GTP + succinate + CoA = succinyl-CoA + GDP + phosphate. Its pathway is carbohydrate metabolism; tricarboxylic acid cycle; succinate from succinyl-CoA (ligase route): step 1/1. Its function is as follows. Succinyl-CoA synthetase functions in the citric acid cycle (TCA), coupling the hydrolysis of succinyl-CoA to the synthesis of either ATP or GTP and thus represents the only step of substrate-level phosphorylation in the TCA. The beta subunit provides nucleotide specificity of the enzyme and binds the substrate succinate, while the binding sites for coenzyme A and phosphate are found in the alpha subunit. In Sorangium cellulosum (strain So ce56) (Polyangium cellulosum (strain So ce56)), this protein is Succinate--CoA ligase [ADP-forming] subunit beta.